Reading from the N-terminus, the 71-residue chain is Small ribosomal subunit protein bS21 (71 aa).

A compositionally biased stretch (basic residues) spans 49–59; sequence AAAAVKRHAKK. The disordered stretch occupies residues 49–71; it reads AAAAVKRHAKKVQREQRRSVRLY. A compositionally biased stretch (basic and acidic residues) spans 60–71; it reads VQREQRRSVRLY.

The protein belongs to the bacterial ribosomal protein bS21 family.

The sequence is that of Small ribosomal subunit protein bS21 from Stutzerimonas stutzeri (strain A1501) (Pseudomonas stutzeri).